Here is a 464-residue protein sequence, read N- to C-terminus: tRNA-2-methylthio-N(6)-dimethylallyladenosine synthase (464 aa).

The region spanning 19–135 (GSYWITTFGC…LENLLGKVDL (117 aa)) is the MTTase N-terminal domain. Positions 28, 64, 98, 170, 174, and 177 each coordinate [4Fe-4S] cluster. Positions 156–393 (RESSICGWVN…NELVETTSKQ (238 aa)) constitute a Radical SAM core domain. The TRAM domain occupies 396 to 464 (ERYLDSIESV…PFSLTGILCL (69 aa)).

It belongs to the methylthiotransferase family. MiaB subfamily. As to quaternary structure, monomer. The cofactor is [4Fe-4S] cluster.

Its subcellular location is the cytoplasm. It carries out the reaction N(6)-dimethylallyladenosine(37) in tRNA + (sulfur carrier)-SH + AH2 + 2 S-adenosyl-L-methionine = 2-methylsulfanyl-N(6)-dimethylallyladenosine(37) in tRNA + (sulfur carrier)-H + 5'-deoxyadenosine + L-methionine + A + S-adenosyl-L-homocysteine + 2 H(+). Its function is as follows. Catalyzes the methylthiolation of N6-(dimethylallyl)adenosine (i(6)A), leading to the formation of 2-methylthio-N6-(dimethylallyl)adenosine (ms(2)i(6)A) at position 37 in tRNAs that read codons beginning with uridine. The sequence is that of tRNA-2-methylthio-N(6)-dimethylallyladenosine synthase from Prochlorococcus marinus (strain MIT 9215).